We begin with the raw amino-acid sequence, 161 residues long: Peptidyl-prolyl cis-trans isomerase-like 3 (161 aa).

S2 is subject to N-acetylserine. Residues 2–154 (SVTLHTDVGD…NDVHIKDITI (153 aa)) form the PPIase cyclophilin-type domain. Residue R61 is modified to Omega-N-methylarginine.

This sequence belongs to the cyclophilin-type PPIase family. PPIL3 subfamily. As to quaternary structure, identified in the spliceosome C complex.

It carries out the reaction [protein]-peptidylproline (omega=180) = [protein]-peptidylproline (omega=0). In terms of biological role, PPIases accelerate the folding of proteins. It catalyzes the cis-trans isomerization of proline imidic peptide bonds in oligopeptides. May be involved in pre-mRNA splicing. This is Peptidyl-prolyl cis-trans isomerase-like 3 (Ppil3) from Mus musculus (Mouse).